The sequence spans 92 residues: Small ribosomal subunit protein uS19 (92 aa).

The protein belongs to the universal ribosomal protein uS19 family.

Protein S19 forms a complex with S13 that binds strongly to the 16S ribosomal RNA. The polypeptide is Small ribosomal subunit protein uS19 (Listeria innocua serovar 6a (strain ATCC BAA-680 / CLIP 11262)).